A 545-amino-acid polypeptide reads, in one-letter code: RAN GTPase-activating protein 2 (545 aa).

A WPP region spans residues 1-116 (MADILDSRPH…VAARELISED (116 aa)). LRR repeat units follow at residues 213–236 (GSILSSLNLSDNALGEKGVRAFGA), 241–264 (LSSLEELYLMNDGISKEAAQAVSE), 269–296 (TENLRVLHFHNNMTGDEGALAIAEVVKR), 325–348 (CTHMEKLDLRDNMFGTEAGVSLSK), 353–380 (FKHMTELYLSYLNLEDEGAIAIVNALKE), 382–405 (ASPIEVLEMAGNDITVEAASAIAA), 410–433 (KQDLNKLNLSENELKDEGCVQIAN), 439–462 (HSKLQYIDMSTNYIRRAGARALAH), and 467–494 (KEAFKLLNIDGNIISEEGIEELKEIFKK). Positions 496-545 (PELLGALDENDPDGEEDDDDEEDEEDEENEGNGNGELESKLKNLEVNQED) are disordered. The span at 503–525 (DENDPDGEEDDDDEEDEEDEENE) shows a compositional bias: acidic residues.

Belongs to the RNA1 family. Homodimer. Interacts with WIP1 and WIP2 through its WPP domain. Component of Ran complexes at least composed of WIT1 or WIT2, RANGAP1 or RANGAP2, and WIP1 or WIP2 or WIP3. Interacts with WIT1.

The protein resides in the cytoplasm. It is found in the nucleus membrane. Its subcellular location is the cytoskeleton. It localises to the spindle. The protein localises to the phragmoplast. Functionally, GTPase activator for the nuclear Ras-related regulatory protein Ran, converting it to the putatively inactive GDP-bound state. This Arabidopsis thaliana (Mouse-ear cress) protein is RAN GTPase-activating protein 2 (RANGAP2).